A 155-amino-acid polypeptide reads, in one-letter code: Ribosome maturation factor RimP (155 aa).

Belongs to the RimP family.

It is found in the cytoplasm. Functionally, required for maturation of 30S ribosomal subunits. The protein is Ribosome maturation factor RimP of Prochlorococcus marinus (strain MIT 9515).